We begin with the raw amino-acid sequence, 876 residues long: Ergothioneine biosynthesis protein 1 (876 aa).

Residues 36 to 350 (IIDIRRVAVE…TYGNEYGLHL (315 aa)) form an L-histidine N(alpha)-methyltransferase region. Position 88 (Tyr-88) interacts with L-histidine. Gly-119, Lys-125, and Asp-146 together coordinate S-adenosyl-L-methionine. Residues Asn-202, Tyr-242, and 315–317 (EQS) each bind L-histidine. The interval 378–874 (ALWATWDVVT…YAWVGARVVR (497 aa)) is hercynylcysteine S-oxide synthase. 3 residues coordinate Fe cation: His-413, His-506, and His-510. Disordered regions lie at residues 631–650 (GTTN…QQLP) and 732–761 (TNNG…SNTT). A compositionally biased stretch (low complexity) spans 744–758 (PSSETPAESSSPSDS).

The protein in the N-terminal section; belongs to the methyltransferase superfamily. EgtD family. This sequence in the C-terminal section; belongs to the EgtB family. The cofactor is Fe(2+).

The protein localises to the cytoplasm. It localises to the nucleus. It catalyses the reaction L-histidine + 3 S-adenosyl-L-methionine = hercynine + 3 S-adenosyl-L-homocysteine + 3 H(+). It carries out the reaction hercynine + L-cysteine + O2 = S-(hercyn-2-yl)-L-cysteine S-oxide + H2O. It functions in the pathway amino-acid biosynthesis; ergothioneine biosynthesis. In terms of biological role, catalyzes the SAM-dependent triple methylation of the alpha-amino group of histidine to form hercynine and subsequent conjugation with cysteine and oxygen to form hercynylcysteine sulfoxide, the first two steps in the biosynthesis pathway of ergothioneine. Ergothioneine is an unusual thio-histidine betaine amino acid that acts as an antioxidant against peroxide in conidia and contributes to conidial longevity. This chain is Ergothioneine biosynthesis protein 1, found in Neurospora crassa (strain ATCC 24698 / 74-OR23-1A / CBS 708.71 / DSM 1257 / FGSC 987).